A 149-amino-acid chain; its full sequence is Calmodulin-3 (149 aa).

Ala2 bears the N-acetylalanine mark. EF-hand domains follow at residues 8–43 (DQIAEFKEAFSLFDKDGDGCITTKELGTVMRSLGQN), 44–79 (PTEAELQDMINEVDADGNGTIDFPEFLNLMARKMKD), 81–116 (DSEEELKEAFRVFDKDQNGFISAAELRHVMTNLGEK), and 117–149 (LTDEEVEEMIREADVDGDGQINYDEFVKVMMAK). Asp21, Asp23, Asp25, Cys27, Glu32, Asp57, Asp59, Asn61, Thr63, Glu68, Asp94, Asp96, Asn98, and Glu105 together coordinate Ca(2+). Lys116 carries the N6,N6,N6-trimethyllysine modification. Asp130, Asp132, Asp134, Gln136, and Glu141 together coordinate Ca(2+).

Belongs to the calmodulin family.

In terms of biological role, calmodulin mediates the control of a large number of enzymes, ion channels and other proteins by Ca(2+). Among the enzymes to be stimulated by the calmodulin-Ca(2+) complex are a number of protein kinases and phosphatases. This is Calmodulin-3 (CAM3) from Oryza sativa subsp. japonica (Rice).